The following is a 226-amino-acid chain: Phosphoribosylformylglycinamidine synthase subunit PurQ (226 aa).

Residues 4-226 enclose the Glutamine amidotransferase type-1 domain; the sequence is RIGVVTFPGS…TSILKKLVNA (223 aa). Cys87 acts as the Nucleophile in catalysis. Residues His196 and Glu198 contribute to the active site.

Part of the FGAM synthase complex composed of 1 PurL, 1 PurQ and 2 PurS subunits.

Its subcellular location is the cytoplasm. The catalysed reaction is N(2)-formyl-N(1)-(5-phospho-beta-D-ribosyl)glycinamide + L-glutamine + ATP + H2O = 2-formamido-N(1)-(5-O-phospho-beta-D-ribosyl)acetamidine + L-glutamate + ADP + phosphate + H(+). The enzyme catalyses L-glutamine + H2O = L-glutamate + NH4(+). The protein operates within purine metabolism; IMP biosynthesis via de novo pathway; 5-amino-1-(5-phospho-D-ribosyl)imidazole from N(2)-formyl-N(1)-(5-phospho-D-ribosyl)glycinamide: step 1/2. Its function is as follows. Part of the phosphoribosylformylglycinamidine synthase complex involved in the purines biosynthetic pathway. Catalyzes the ATP-dependent conversion of formylglycinamide ribonucleotide (FGAR) and glutamine to yield formylglycinamidine ribonucleotide (FGAM) and glutamate. The FGAM synthase complex is composed of three subunits. PurQ produces an ammonia molecule by converting glutamine to glutamate. PurL transfers the ammonia molecule to FGAR to form FGAM in an ATP-dependent manner. PurS interacts with PurQ and PurL and is thought to assist in the transfer of the ammonia molecule from PurQ to PurL. This Streptomyces coelicolor (strain ATCC BAA-471 / A3(2) / M145) protein is Phosphoribosylformylglycinamidine synthase subunit PurQ.